A 364-amino-acid polypeptide reads, in one-letter code: Thebaine 6-O-demethylase (364 aa).

One can recognise a Fe2OG dioxygenase domain in the interval 214–314; sequence GTQAMRMNYY…RLSIATFHDP (101 aa). Residue Tyr223 participates in 2-oxoglutarate binding. The Fe cation site is built by His238, Asp240, and His295. 2-oxoglutarate contacts are provided by Arg305 and Ser307.

Belongs to the iron/ascorbate-dependent oxidoreductase family. It depends on L-ascorbate as a cofactor. The cofactor is Fe cation. In terms of tissue distribution, mainly expressed in stems and leaves and, to a lower extent, in capsules and roots.

The catalysed reaction is thebaine + 2-oxoglutarate + O2 = neopinone + formaldehyde + succinate + CO2. It carries out the reaction oripavine + 2-oxoglutarate + O2 = neomorphinone + formaldehyde + succinate + CO2. It catalyses the reaction (S)-canadine + S-adenosyl-L-methionine = (S)-cis-N-methylcanadine + S-adenosyl-L-homocysteine. The enzyme catalyses thebaine + 2-oxoglutarate + O2 = 6-O-demethylthebaine + formaldehyde + succinate + CO2 + H(+). It participates in alkaloid biosynthesis; morphine biosynthesis. Moderate substrate inhibition. Not inhibited in vitro by acylcyclohexanediones. Functionally, non-heme dioxygenase involved in biosynthesis of morphinan-type benzylisoquinoline and opiate alkaloids natural products. Mediates the conversion of thebaine to neopinone. Also catalyzes, with lower efficiency, the 6-O-demethylation of oripavine to neomorphinone, which is converted spontaneously to morphinone. Supports dealkylation reactions such as O,O-demethylenation in the metabolism of protopine, benzo[c]phenanthridine, and rhoeadine alkaloids; cleaves a methylenedioxy bridge leaving two hydroxyl groups. Catalyzes the O-demethylation of methylenedioxy bridges on protopine alkaloids such as allocryptopine. No activity with (S)-reticuline, salutaridine, papaverine, (S)-corytuberine, (S)-scoulerine, pavine, noscapine or codeine. In Papaver somniferum (Opium poppy), this protein is Thebaine 6-O-demethylase.